The following is a 390-amino-acid chain: Succinate--CoA ligase [ADP-forming] subunit beta (390 aa).

An ATP-grasp domain is found at Lys9–Met245. ATP is bound by residues Lys46, Gly53 to Gly55, Glu99, Ser102, and Glu107. Positions 200 and 214 each coordinate Mg(2+). Substrate is bound by residues Asn265 and Gly322–Val324.

It belongs to the succinate/malate CoA ligase beta subunit family. In terms of assembly, heterotetramer of two alpha and two beta subunits. It depends on Mg(2+) as a cofactor.

The catalysed reaction is succinate + ATP + CoA = succinyl-CoA + ADP + phosphate. The enzyme catalyses GTP + succinate + CoA = succinyl-CoA + GDP + phosphate. The protein operates within carbohydrate metabolism; tricarboxylic acid cycle; succinate from succinyl-CoA (ligase route): step 1/1. In terms of biological role, succinyl-CoA synthetase functions in the citric acid cycle (TCA), coupling the hydrolysis of succinyl-CoA to the synthesis of either ATP or GTP and thus represents the only step of substrate-level phosphorylation in the TCA. The beta subunit provides nucleotide specificity of the enzyme and binds the substrate succinate, while the binding sites for coenzyme A and phosphate are found in the alpha subunit. In Coxiella burnetii (strain Dugway 5J108-111), this protein is Succinate--CoA ligase [ADP-forming] subunit beta.